Reading from the N-terminus, the 222-residue chain is 7-cyano-7-deazaguanine synthase (222 aa).

An ATP-binding site is contributed by 8–18 (LSGGMDSTTLA). 4 residues coordinate Zn(2+): cysteine 188, cysteine 196, cysteine 199, and cysteine 202.

It belongs to the QueC family. Zn(2+) serves as cofactor.

It catalyses the reaction 7-carboxy-7-deazaguanine + NH4(+) + ATP = 7-cyano-7-deazaguanine + ADP + phosphate + H2O + H(+). It functions in the pathway purine metabolism; 7-cyano-7-deazaguanine biosynthesis. Its function is as follows. Catalyzes the ATP-dependent conversion of 7-carboxy-7-deazaguanine (CDG) to 7-cyano-7-deazaguanine (preQ(0)). The sequence is that of 7-cyano-7-deazaguanine synthase from Methanoculleus marisnigri (strain ATCC 35101 / DSM 1498 / JR1).